The sequence spans 504 residues: Phosphoenolpyruvate carboxylase (504 aa).

The span at Met-1–Asp-16 shows a compositional bias: polar residues. The tract at residues Met-1 to Pro-21 is disordered.

This sequence belongs to the PEPCase type 2 family. Homotetramer. Mg(2+) serves as cofactor.

It carries out the reaction oxaloacetate + phosphate = phosphoenolpyruvate + hydrogencarbonate. Its function is as follows. Catalyzes the irreversible beta-carboxylation of phosphoenolpyruvate (PEP) to form oxaloacetate (OAA), a four-carbon dicarboxylic acid source for the tricarboxylic acid cycle. This is Phosphoenolpyruvate carboxylase from Leuconostoc mesenteroides subsp. mesenteroides (strain ATCC 8293 / DSM 20343 / BCRC 11652 / CCM 1803 / JCM 6124 / NCDO 523 / NBRC 100496 / NCIMB 8023 / NCTC 12954 / NRRL B-1118 / 37Y).